Here is a 975-residue protein sequence, read N- to C-terminus: Translation initiation factor IF-2 (975 aa).

2 disordered regions span residues 49 to 110 (KLSG…APKA) and 193 to 339 (AAAP…GRGA). The span at 63–72 (KKTAARKAAP) shows a compositional bias: basic residues. 3 stretches are compositionally biased toward low complexity: residues 73–94 (KKAA…AKTP), 193–202 (AAAPEAPAPQ), and 209–225 (VVGT…ASAP). Basic and acidic residues predominate over residues 308 to 318 (GADRGGRDFDK). A compositionally biased stretch (low complexity) spans 324–336 (GPSAPAAGPAAAG). In terms of domain architecture, tr-type G spans 469-639 (TRPPVVTVMG…KLVAEVAELK (171 aa)). Residues 478–485 (GHVDHGKT) are G1. 478 to 485 (GHVDHGKT) lines the GTP pocket. Residues 503 to 507 (GITQH) form a G2 region. The interval 525-528 (DTPG) is G3. GTP is bound by residues 525–529 (DTPGH) and 579–582 (NKID). Residues 579–582 (NKID) are G4. The G5 stretch occupies residues 615–617 (SAL).

The protein belongs to the TRAFAC class translation factor GTPase superfamily. Classic translation factor GTPase family. IF-2 subfamily.

The protein localises to the cytoplasm. One of the essential components for the initiation of protein synthesis. Protects formylmethionyl-tRNA from spontaneous hydrolysis and promotes its binding to the 30S ribosomal subunits. Also involved in the hydrolysis of GTP during the formation of the 70S ribosomal complex. This chain is Translation initiation factor IF-2, found in Bdellovibrio bacteriovorus (strain ATCC 15356 / DSM 50701 / NCIMB 9529 / HD100).